The sequence spans 420 residues: Histidine--tRNA ligase (420 aa).

This sequence belongs to the class-II aminoacyl-tRNA synthetase family. As to quaternary structure, homodimer.

Its subcellular location is the cytoplasm. It carries out the reaction tRNA(His) + L-histidine + ATP = L-histidyl-tRNA(His) + AMP + diphosphate + H(+). The chain is Histidine--tRNA ligase from Thermotoga petrophila (strain ATCC BAA-488 / DSM 13995 / JCM 10881 / RKU-1).